Reading from the N-terminus, the 164-residue chain is Large ribosomal subunit protein uL15 (164 aa).

A compositionally biased stretch (basic residues) spans 1–33; the sequence is MTSKKRRQRGSRTHGGGTHKNRRGAGHRGGRGR. Disordered regions lie at residues 1-59 and 137-164; these read MTSK…PGAE and AGGS…NDEN. A compositionally biased stretch (basic and acidic residues) spans 34 to 43; it reads AGRDKHEQHN. The segment covering 153 to 164 has biased composition (acidic residues); sequence GEDEEPNSNDEN.

The protein belongs to the universal ribosomal protein uL15 family. Part of the 50S ribosomal subunit.

In terms of biological role, binds to the 23S rRNA. In Haloquadratum walsbyi (strain DSM 16790 / HBSQ001), this protein is Large ribosomal subunit protein uL15.